The primary structure comprises 200 residues: uncharacterized protein (200 aa).

The helical transmembrane segment at 7–29 (FFFLFSFISHAMMLTGLIGSSSF) threads the bilayer.

It localises to the membrane. This is an uncharacterized protein from Saccharomyces cerevisiae (strain ATCC 204508 / S288c) (Baker's yeast).